A 274-amino-acid polypeptide reads, in one-letter code: F-actin-capping protein subunit alpha (274 aa).

The protein belongs to the F-actin-capping protein alpha subunit family. As to quaternary structure, heterodimer of an alpha and a beta subunit.

It localises to the cytoplasm. F-actin-capping proteins bind in a Ca(2+)-independent manner to the fast growing ends of actin filaments (barbed end) thereby blocking the exchange of subunits at these ends. Unlike other capping proteins (such as gelsolin and severin), these proteins do not sever actin filaments. The chain is F-actin-capping protein subunit alpha from Chaetomium thermophilum (strain DSM 1495 / CBS 144.50 / IMI 039719) (Thermochaetoides thermophila).